Here is a 256-residue protein sequence, read N- to C-terminus: PGL/p-HBAD biosynthesis glycosyltransferase Mb2981 (256 aa).

Belongs to the glycosyltransferase 2 family.

Its function is as follows. Involved in glycosylation steps downstream of mono-O-methyl-glycosyl-p-hydroxybenzoic acid derivative (p-HBAD I) and 2-O-methyl-rhamnosyl-phenolphthiocerol dimycocerosate (mycoside B) during the p-hydroxybenzoic acid derivatives (p-HBAD) and glycosylated phenolphthiocerol dimycocerosates (PGL) biosynthesis. This is PGL/p-HBAD biosynthesis glycosyltransferase Mb2981 from Mycobacterium bovis (strain ATCC BAA-935 / AF2122/97).